The sequence spans 262 residues: Cell division protein ZapD (262 aa).

Belongs to the ZapD family. As to quaternary structure, interacts with FtsZ.

The protein resides in the cytoplasm. Functionally, cell division factor that enhances FtsZ-ring assembly. Directly interacts with FtsZ and promotes bundling of FtsZ protofilaments, with a reduction in FtsZ GTPase activity. The sequence is that of Cell division protein ZapD from Nitrosomonas europaea (strain ATCC 19718 / CIP 103999 / KCTC 2705 / NBRC 14298).